The sequence spans 455 residues: 3-phosphoshikimate 1-carboxyvinyltransferase (455 aa).

A compositionally biased stretch (polar residues) spans 1–19 (MSHGASSRPATARKSSGLS). The interval 1 to 25 (MSHGASSRPATARKSSGLSGTVRIP) is disordered. Lysine 28 contacts phosphoenolpyruvate. Positions 29 and 33 each coordinate 3-phosphoshikimate. A phosphoenolpyruvate-binding site is contributed by arginine 128. 5 residues coordinate 3-phosphoshikimate: serine 173, alanine 174, glutamine 175, aspartate 326, and lysine 353. Residue glutamine 175 participates in phosphoenolpyruvate binding. Aspartate 326 (proton acceptor) is an active-site residue. 2 residues coordinate phosphoenolpyruvate: arginine 357 and arginine 405.

The protein belongs to the EPSP synthase family. In terms of assembly, monomer.

It localises to the cytoplasm. The catalysed reaction is 3-phosphoshikimate + phosphoenolpyruvate = 5-O-(1-carboxyvinyl)-3-phosphoshikimate + phosphate. The protein operates within metabolic intermediate biosynthesis; chorismate biosynthesis; chorismate from D-erythrose 4-phosphate and phosphoenolpyruvate: step 6/7. Its activity is regulated as follows. Is resistant to inhibition by glyphosate (glyphosate-tolerant) like other members of class II EPSPS, in contrast to class I EPSPS, which is glyphosate-sensitive. Is much less sensitive to inhibition by the (R)-difluoromethyl and (R)-phosphonate analogs of the tetrahedral reaction intermediate than the representative class I EPSPS from E.coli. Is highly activated in the presence of cations, such as NH4(+), Rb(+), and K(+). In terms of biological role, catalyzes the transfer of the enolpyruvyl moiety of phosphoenolpyruvate (PEP) to the 5-hydroxyl of shikimate-3-phosphate (S3P) to produce enolpyruvyl shikimate-3-phosphate and inorganic phosphate. This is 3-phosphoshikimate 1-carboxyvinyltransferase from Agrobacterium sp. (strain CP4).